The following is a 127-amino-acid chain: Large ribosomal subunit protein uL24 (127 aa).

Belongs to the universal ribosomal protein uL24 family. In terms of assembly, component of the large ribosomal subunit. Mature ribosomes consist of a small (40S) and a large (60S) subunit. The 40S subunit contains about 32 different proteins and 1 molecule of RNA (18S). The 60S subunit contains 45 different proteins and 3 molecules of RNA (25S, 5.8S and 5S).

Its subcellular location is the cytoplasm. Its function is as follows. Component of the ribosome, a large ribonucleoprotein complex responsible for the synthesis of proteins in the cell. The small ribosomal subunit (SSU) binds messenger RNAs (mRNAs) and translates the encoded message by selecting cognate aminoacyl-transfer RNA (tRNA) molecules. The large subunit (LSU) contains the ribosomal catalytic site termed the peptidyl transferase center (PTC), which catalyzes the formation of peptide bonds, thereby polymerizing the amino acids delivered by tRNAs into a polypeptide chain. The nascent polypeptides leave the ribosome through a tunnel in the LSU and interact with protein factors that function in enzymatic processing, targeting, and the membrane insertion of nascent chains at the exit of the ribosomal tunnel. This Candida albicans (strain SC5314 / ATCC MYA-2876) (Yeast) protein is Large ribosomal subunit protein uL24.